The primary structure comprises 2596 residues: Cadherin EGF LAG seven-pass G-type receptor fmi-1 (2596 aa).

The N-terminal stretch at 1–22 (MMLDRIMFLLFFILSLVIGSFS) is a signal peptide. The Extracellular segment spans residues 23–2229 (EYLDDKYYST…IVRVAQMDNM (2207 aa)). 8 Cadherin domains span residues 166–270 (QQEK…SPIF), 271–375 (EKDS…APVF), 376–479 (ASDS…APTL), 480–581 (IAAQ…APTF), 582–682 (DKKE…APYF), 683–784 (NDHP…SPQF), 785–892 (TSSS…APTF), and 893–1000 (EQLS…KPAL). N-linked (GlcNAc...) asparagine glycosylation is found at N381, N387, N562, N587, N765, and N824. 2 N-linked (GlcNAc...) asparagine glycosylation sites follow: N1030 and N1263. The 37-residue stretch at 1251 to 1287 (RIDECYRGRCSNNSTCVAFENTYQCECKPGWIGRHCE) folds into the EGF-like 1 domain. 12 disulfides stabilise this stretch: C1255/C1266, C1260/C1275, C1277/C1286, C1497/C1526, C1533/C1546, C1540/C1555, C1557/C1567, C1709/C1732, C1738/C1750, C1744/C1759, C1761/C1770, and C1780/C1785. A Laminin G-like 1 domain is found at 1333–1526 (SVSFDGEGLL…HKVGQVHEGC (194 aa)). Residues 1529 to 1568 (RKDFCSTSDGQCSATSKCVNRWGGRICSCPQSVHSTGECV) enclose the EGF-like 2 domain. The region spanning 1577–1732 (RGHSLFEEES…KKKGKTRAGC (156 aa)) is the Laminin G-like 2 domain. 2 consecutive EGF-like domains span residues 1734–1771 (VPNRCSVDSICPAESTCHRAWNKHKCKCHKSFVGDTCL) and 1776–1808 (VANVCSSGTCVSSNTTAGYECICPAGKTGKNCQ). N-linked (GlcNAc...) asparagine glycosylation occurs at N1789. A disulfide bond links C1798 and C1807. Residues N1965, N1992, N2152, N2195, and N2228 are each glycosylated (N-linked (GlcNAc...) asparagine). Residues 2054 to 2219 (EYSTLISKLW…TMFVNDQSSS (166 aa)) enclose the GAIN-B domain. A disulfide bond links C2174 and C2201. The interval 2174–2219 (CVRFDEKSGTWTARGAALIGLNLTHAACEYNRIGVFTMFVNDQSSS) is GPS. The helical transmembrane segment at 2230-2250 (TSPAIAGVALFLCFLSILLTL) threads the bilayer. Over 2251 to 2261 (SRRSLKTHSVR) the chain is Cytoplasmic. The chain crosses the membrane as a helical span at residues 2262–2282 (IGFILFFAINILNLFFVHKTA). Over 2283–2292 (INQAYCPVRN) the chain is Extracellular. Residues 2293–2313 (AMLSFTSSAPFAWLFLYGLYI) traverse the membrane as a helical segment. At 2314–2326 (YRMLADGSSSPSL) the chain is on the cytoplasmic side. Residues 2327–2347 (TTSLLVGIVFPCLISFTTFFV) form a helical membrane-spanning segment. The Extracellular portion of the chain corresponds to 2348–2356 (TDQCSLSPH). Residues 2357-2377 (LWLFWCIILPIGLFLLLSFYA) traverse the membrane as a helical segment. Residues 2378-2401 (AATSVLVSLHKKYDVFVAKYNVKR) are Cytoplasmic-facing. A helical membrane pass occupies residues 2402–2422 (AVFQHFILTIFTLGMTLTGLF). Topologically, residues 2423 to 2437 (ANQLPLPMEIMEISQ) are extracellular. A helical membrane pass occupies residues 2438–2458 (SIIYLIAALVIFLWCVCDITT). Residues 2459-2596 (KASDSNPSMW…KNTTSTFNRE (138 aa)) are Cytoplasmic-facing.

It belongs to the G-protein coupled receptor 2 family. LN-TM7 subfamily. In terms of tissue distribution, expressed in a region of neuropil around the nerve ring and the ventral cord (at protein level). Expressed in the head, tail, ventral cord, nerve ring and neurons including HSN neurons. Expressed in DA, VA, and VB and weakly in the DB cholinergic neurons. Not expressed in ventral D-type GABAergic motorneurons.

It is found in the cell membrane. Its subcellular location is the cell projection. The protein localises to the axon. The protein resides in the dendrite. Functionally, during ventral cord development, required for axon fasciculation and navigation, mediating both pioneer and follower axon extension, guidance and track formation. Acts in CEPsh glia and SubL neurons to guide follower axons into the nerve ring. Promotes motorneuron development by positively regulating the extension of the anterior neurite of ventral D-type GABAergic motorneurons along the anterior-posterior axis of the ventral nerve cord. Plays a role in synaptogenesis by regulating synaptic vesicle accumulation at GABAergic and cholinergic neuromuscular junctions. This Caenorhabditis elegans protein is Cadherin EGF LAG seven-pass G-type receptor fmi-1.